Consider the following 440-residue polypeptide: Chromosome partition protein MukF (440 aa).

Positions 208–236 are leucine-zipper; the sequence is LSETSGTLRELQDTLEAAGDKLQANLLRI.

This sequence belongs to the MukF family. In terms of assembly, interacts, and probably forms a ternary complex, with MukE and MukB via its C-terminal region. The complex formation is stimulated by calcium or magnesium. It is required for an interaction between MukE and MukB.

It is found in the cytoplasm. Its subcellular location is the nucleoid. Functionally, involved in chromosome condensation, segregation and cell cycle progression. May participate in facilitating chromosome segregation by condensation DNA from both sides of a centrally located replisome during cell division. Not required for mini-F plasmid partitioning. Probably acts via its interaction with MukB and MukE. Overexpression results in anucleate cells. It has a calcium binding activity. The chain is Chromosome partition protein MukF from Salmonella arizonae (strain ATCC BAA-731 / CDC346-86 / RSK2980).